Here is a 660-residue protein sequence, read N- to C-terminus: Potassium voltage-gated channel subfamily KQT member 1 (660 aa).

A compositionally biased stretch (polar residues) spans 1–18 (MSSEVKSRWSGSGSQKSG). The disordered stretch occupies residues 1–67 (MSSEVKSRWS…PESRAADSRA (67 aa)). Over 1 to 113 (MSSEVKSRWS…YNFLERPTGW (113 aa)) the chain is Cytoplasmic. A compositionally biased stretch (basic and acidic residues) spans 53-67 (STDKNPESRAADSRA). Residues 114 to 135 (KCFIYHFTVFLIVLVCLIFSVM) form a helical membrane-spanning segment. Topologically, residues 136-146 (STIEQYHYFAN) are extracellular. A helical membrane pass occupies residues 147–169 (RALVWMEIVLVVFFGTEYIVRLW). Residues 170–185 (SAGCRSKYVGFWGRLR) are Cytoplasmic-facing. Residues 186-211 (FARKPISIIDLIVVVASVIVLCVGSN) form a helical membrane-spanning segment. The Extracellular segment spans residues 212-219 (GQVFATSA). The chain crosses the membrane as a helical; Voltage-sensor span at residues 220–235 (IRGIRFLQILRMLHVD). At 236 to 253 (RQGGTWRLLGSVVFIHRQ) the chain is on the cytoplasmic side. Residue Gln-237 coordinates a 1,2-diacyl-sn-glycero-3-phospho-(1D-myo-inositol-4,5-bisphosphate). The helical transmembrane segment at 254–276 (ELITTLYIGFLGLIFSSYFVYLA) threads the bilayer. Topologically, residues 277 to 292 (EKDAVDDSGSQQFGSY) are extracellular. Residues 293–313 (ADALWWGVVTVTTIGYGDKVP) constitute an intramembrane region (pore-forming). Topologically, residues 314 to 315 (QT) are extracellular. A helical membrane pass occupies residues 316–341 (WIGRTIASCFSVFAISFFALPAGILG). Over 342–660 (SGFALKVQQK…RKDQDNQPDL (319 aa)) the chain is Cytoplasmic. The tract at residues 399-426 (SPSPKTKKSVGKRKKLKTDKDNGLNSEK) is disordered. The segment covering 403-415 (KTKKSVGKRKKLK) has biased composition (basic residues). Residues 579–615 (KNTIGARLNRVEEKFVHMDQKLNTITDMLHHLVAHQQ) adopt a coiled-coil conformation.

Belongs to the potassium channel family. KQT (TC 1.A.1.15) subfamily. Kv7.1/KCNQ1 sub-subfamily. As to quaternary structure, tetramer. Heterotetramer with KCNE1; targets to the membrane raft. Interacts (via C-terminus) with CALM; forms a heterotetramer in a calcium-independent manner. Interacts with KCNE2; form a heterooligomer complex that targets to the membrane raft and leading to currents with an apparently instantaneous activation, a rapid deactivation process and a linear current-voltage relationship and decreases the amplitude of the outward current. Interacts with KCNE3; four KCNE3 molecules are bound to one KCNQ1 tetramer (4:4 KCNQ1:KCNE3 stoichiometry); alters membrane raft localization; affects KCNQ1 structure and gating properties. Interacts with KCNE4; impairs KCNQ1 localization in lipid rafts and inhibits voltage-gated potassium channel activity. Interacts with KCNE5; impairs KCNQ1 localization in lipid rafts and only conducts current upon strong and continued depolarization. In terms of tissue distribution, expressed only in rectal gland and heart. Faintly expressed in intestine. Undetectable in kidney, brain, testis, liver and gills.

The protein localises to the cell membrane. The protein resides in the cytoplasmic vesicle membrane. Its subcellular location is the membrane raft. It localises to the endoplasmic reticulum. It is found in the basolateral cell membrane. The catalysed reaction is K(+)(in) = K(+)(out). PIP2 molecule is essential to activate KCNQ channels by inducing the coupling of the voltage-sensing domain (VSD) and the pore-forming domain (PD). Upon channel activation, PIP2 disrupts the VSD-calmodulin/CALM interactions, causing the release of CALM from the VSD which triggers the opening of the gate. Calcium potentiates KCNQ1 channel current through calcium-bound CALM. Calcium-bound CALM competes with PIP2 to stabilize the channel open state. Functionally, pore-forming subunit of the voltage-gated potassium (Kv) channel involved in the regulation of cardiomyocyte excitability and important in normal development and functions of myocardium, inner ear, stomach and colon. Associates with KCNE beta subunits that modulates current kinetics. Induces a voltage-dependent by rapidly activating and slowly deactivating potassium-selective outward current. Also promotes a delayed voltage activated potassium current showing outward rectification characteristic. During beta-adrenergic receptor stimulation participates in cardiac repolarization by associating with KCNE1 to form the I(Ks) cardiac potassium current that increases the amplitude and slows down the activation kinetics of outward potassium current I(Ks). When associated with KCNE3, forms the potassium channel that is important for cyclic AMP-stimulated intestinal secretion of chloride ions. When associated with KCNE2, forms a heterooligomer complex leading to currents with an apparently instantaneous activation, a rapid deactivation process and a linear current-voltage relationship and decreases the amplitude of the outward current. When associated with KCNE4, inhibits voltage-gated potassium channel activity. When associated with KCNE5, this complex only conducts current upon strong and continued depolarization. The sequence is that of Potassium voltage-gated channel subfamily KQT member 1 from Squalus acanthias (Spiny dogfish).